We begin with the raw amino-acid sequence, 242 residues long: Probable transcriptional regulatory protein Bmul_0984/BMULJ_02280 (242 aa).

This sequence belongs to the TACO1 family.

It is found in the cytoplasm. This chain is Probable transcriptional regulatory protein Bmul_0984/BMULJ_02280, found in Burkholderia multivorans (strain ATCC 17616 / 249).